The sequence spans 135 residues: Fluoride-specific ion channel FluC 1 (135 aa).

A run of 4 helical transmembrane segments spans residues 7-27 (LAVG…GLVL), 32-52 (GFPY…PFLM), 65-85 (LALA…SFSV), and 96-116 (WSAF…LSLL). 2 residues coordinate Na(+): G75 and T78.

This sequence belongs to the fluoride channel Fluc/FEX (TC 1.A.43) family.

It is found in the cell membrane. It catalyses the reaction fluoride(in) = fluoride(out). Its activity is regulated as follows. Na(+) is not transported, but it plays an essential structural role and its presence is essential for fluoride channel function. Fluoride-specific ion channel. Important for reducing fluoride concentration in the cell, thus reducing its toxicity. This is Fluoride-specific ion channel FluC 1 from Latilactobacillus sakei subsp. sakei (strain 23K) (Lactobacillus sakei subsp. sakei).